Reading from the N-terminus, the 524-residue chain is Cytochrome P450 704B1 (524 aa).

Residues serine 2 to glutamine 22 traverse the membrane as a helical segment. Cysteine 471 is a heme binding site.

It belongs to the cytochrome P450 family. The cofactor is heme.

The protein localises to the membrane. The catalysed reaction is an omega-methyl-long-chain fatty acid + reduced [NADPH--hemoprotein reductase] + O2 = an omega-hydroxy-long-chain fatty acid + oxidized [NADPH--hemoprotein reductase] + H2O + H(+). Involved in pollen wall development. Catalyzes the conversion of long-chain fatty acids to the corresponding omega-hydroxylated fatty acids. Omega-hydroxylated fatty acids, together with in-chain hydroxylated fatty acids, are key monomeric aliphatic building blocks for sporopollenin synthesis during exine formation. The chain is Cytochrome P450 704B1 (CYP704B1) from Arabidopsis thaliana (Mouse-ear cress).